A 290-amino-acid chain; its full sequence is Glycine-N-acyltransferase-like protein 3 (290 aa).

It carries out the reaction an acyl-CoA + glycine = an N-acylglycine + CoA + H(+). It catalyses the reaction (9Z)-octadecenoyl-CoA + glycine = N-(9Z-octadecenoyl)glycine + CoA + H(+). The enzyme catalyses hexadecanoyl-CoA + glycine = N-hexadecanoylglycine + CoA + H(+). Its pathway is lipid metabolism. Functionally, catalyzes the conjugation of long-chain fatty acyl-CoA thioester and glycine to produce long-chain N-(fatty acyl)glycine, an intermediate in the primary fatty acid amide biosynthetic pathway. The polypeptide is Glycine-N-acyltransferase-like protein 3 (Mus musculus (Mouse)).